Reading from the N-terminus, the 427-residue chain is O-methyltransferase FrzF (427 aa).

Asp281 contacts S-adenosyl-L-methionine. Residue His327 is the Proton acceptor of the active site.

This sequence belongs to the class I-like SAM-binding methyltransferase superfamily. Cation-independent O-methyltransferase family. In terms of assembly, homodimer.

The enzyme catalyses (1S,4S)-4-[(4-hydroxyphenyl)methyl]-2,5-diazaspiro[bicyclo[3.2.1]octane-6,1'-cyclohexan]-4'-one + S-adenosyl-L-methionine = (1S,4S)-4-[(4-methoxyphenyl)methyl]-2,5-diazaspiro[bicyclo[3.2.1]octane-6,1'-cyclohexan]-4'-one + S-adenosyl-L-homocysteine + H(+). The catalysed reaction is (1S,4S)-4-[(4-hydroxyphenyl)methyl]-2-methyl-2,5-diazaspiro[bicyclo[3.2.1]octane-6,1'-cyclohexan]-4'-one + S-adenosyl-L-methionine = (1S,4S)-4-[(4-methoxyphenyl)methyl]-2-methyl-2,5-diazaspiro[bicyclo[3.2.1]octane-6,1'-cyclohexan]-4'-one + S-adenosyl-L-homocysteine + H(+). It participates in secondary metabolite biosynthesis. Functionally, O-methyltransferase; part of the gene cluster that mediates the biosynthesis of the alkaloid (-)-FR901483, a potent immunosuppressant that shows efficacy in animal models and a probable inhibitor of purine nucleotide biosynthesis by targeting phosphoribosylpyrophosphate amidotransferase (PPAT). Within the pathway, FrzF methylates the phenolic oxygen at position C4. The biosynthesis of (-)-FR901483 starts with the condensation of two L-tyrosines to yield (S,S)-dityrosyl-piperazine. This process occurs in 3 steps with the non-canonical nonribosomal peptide synthetase FrzA catalyzing the reduction of L-tyrosine into L-tyrosinal, the spontaneous condensation of 2 L-tyrosinal units, and the subsequent reduction by the NmrA-like family domain-containing oxidoreductase FrzB. The cytochrome P450 monooxygenase FrzC then performs coupling between N10 and C1' to morph the piperazine into a 1,4-diazabicyclo[3.2.1]octane spiro-fused to a 2,5-cyclohexadienone. The dienone portion is further reduced to cyclohexanone by the flavin-dependent reductase FrzD. The methyltranserases (MTs) FrzE and FrzF are then involved in the methylation at the C10' amine and the C4 phenolic oxygen, respectively. The order of the two MTs appear to be interchangeable. Cleavage of the C9-N10' bond by the dioxygenase FrzG then leads to formation of a conjugated iminium. In addition to the oxidation of C9, an additional dehydrogenation between C7 and C8 can occur to give a likely shunt product. The next biosynthetic step is the intramolecular aldol condensation catalyzed by the newly identified aldolase FrzH to yield an aza-tricyclic product with the formation of a C9-C3' bond. The short-chain dehydrogenase/reductase FrzI then produces dephospho-(-)-FR901483 that is phosphorylated at C4'-OH into (-)-FR901483 by the phosphotransferase FrzJ. This is O-methyltransferase FrzF from Cladobotryum sp.